A 356-amino-acid polypeptide reads, in one-letter code: D-amino-acid oxidase (356 aa).

The signal sequence occupies residues Met-1–Ala-17. FAD-binding residues include Ala-9, Ser-44, Gly-48, and Asn-50. Phe-54 provides a ligand contact to anthranilate. Residue Val-171 coordinates FAD. The N-linked (GlcNAc...) asparagine glycan is linked to Asn-192. Tyr-243 is a binding site for anthranilate. (R)-lactate is bound at residue Tyr-243. N-linked (GlcNAc...) asparagine glycosylation occurs at Asn-262. Residues Arg-302, Ala-329, Gly-332, Tyr-333, and Gln-334 each contribute to the FAD site. Anthranilate is bound at residue Arg-302. Arg-302 is a (R)-lactate binding site.

It belongs to the DAMOX/DASOX family. The cofactor is FAD.

Its subcellular location is the peroxisome matrix. It catalyses the reaction a D-alpha-amino acid + O2 + H2O = a 2-oxocarboxylate + H2O2 + NH4(+). It carries out the reaction D-alanine + O2 + H2O = pyruvate + H2O2 + NH4(+). The catalysed reaction is D-serine + O2 + H2O = 3-hydroxypyruvate + H2O2 + NH4(+). The enzyme catalyses D-phenylalanine + O2 + H2O = 3-phenylpyruvate + H2O2 + NH4(+). It catalyses the reaction D-lysine + O2 + H2O = 6-amino-2-oxohexanoate + H2O2 + NH4(+). It carries out the reaction D-tyrosine + O2 + H2O = 3-(4-hydroxyphenyl)pyruvate + H2O2 + NH4(+). The catalysed reaction is D-methionine + O2 + H2O = 4-methylsulfanyl-2-oxobutanoate + H2O2 + NH4(+). The enzyme catalyses D-tryptophan + O2 + H2O = indole-3-pyruvate + H2O2 + NH4(+). It catalyses the reaction D-leucine + O2 + H2O = 4-methyl-2-oxopentanoate + H2O2 + NH4(+). It carries out the reaction D-valine + O2 + H2O = 3-methyl-2-oxobutanoate + H2O2 + NH4(+). Its activity is regulated as follows. Inhibited by benzoate and hypochlorite. Its function is as follows. Catalyzes the oxidative deamination of D-amino acids with broad substrate specificity. Enables the organism to utilize D-amino acids as a source of nutrients. The sequence is that of D-amino-acid oxidase from Trigonopsis variabilis (Yeast).